The sequence spans 97 residues: Bacterial microcompartment shell protein EutM (97 aa).

The region spanning 3–87 (ALGMIETRGL…PHGDLEEVFP (85 aa)) is the BMC domain.

It belongs to the bacterial microcompartments protein family. As to quaternary structure, homohexamer with a central pore of up to 8.6 Angstroms diameter. The hexamers pack into a two-dimensional array. Interacts with EutQ.

It localises to the bacterial microcompartment. The protein operates within amine and polyamine degradation; ethanolamine degradation. In terms of biological role, probably a major component of the bacterial microcompartment (BMC) shell dedicated to ethanolamine degradation. Each homohexamer has a central pore with an opening of up to 8.6 Angstroms. A positively-charged funnel leads to the pore from each side of the hexamer. The pore probably allows metabolite passage into and out of the BMC. The polypeptide is Bacterial microcompartment shell protein EutM (eutM) (Escherichia coli O6:H1 (strain CFT073 / ATCC 700928 / UPEC)).